A 338-amino-acid chain; its full sequence is Glycerol-3-phosphate dehydrogenase [NAD(P)+] (338 aa).

NADPH-binding residues include Ser-11, Trp-12, His-32, His-33, and Lys-109. Residues Lys-109, Gly-140, and Ser-142 each contribute to the sn-glycerol 3-phosphate site. Ala-144 provides a ligand contact to NADPH. Sn-glycerol 3-phosphate contacts are provided by Lys-195, Asp-248, Ser-258, Arg-259, and Asn-260. Lys-195 serves as the catalytic Proton acceptor. Arg-259 is a binding site for NADPH. 2 residues coordinate NADPH: Val-283 and Glu-285.

Belongs to the NAD-dependent glycerol-3-phosphate dehydrogenase family.

The protein localises to the cytoplasm. It carries out the reaction sn-glycerol 3-phosphate + NAD(+) = dihydroxyacetone phosphate + NADH + H(+). The catalysed reaction is sn-glycerol 3-phosphate + NADP(+) = dihydroxyacetone phosphate + NADPH + H(+). It functions in the pathway membrane lipid metabolism; glycerophospholipid metabolism. Its function is as follows. Catalyzes the reduction of the glycolytic intermediate dihydroxyacetone phosphate (DHAP) to sn-glycerol 3-phosphate (G3P), the key precursor for phospholipid synthesis. The polypeptide is Glycerol-3-phosphate dehydrogenase [NAD(P)+] (Leuconostoc citreum (strain KM20)).